The following is a 1378-amino-acid chain: DNA-directed RNA polymerase subunit beta (1378 aa).

Belongs to the RNA polymerase beta chain family. As to quaternary structure, the RNAP catalytic core consists of 2 alpha, 1 beta, 1 beta' and 1 omega subunit. When a sigma factor is associated with the core the holoenzyme is formed, which can initiate transcription.

It catalyses the reaction RNA(n) + a ribonucleoside 5'-triphosphate = RNA(n+1) + diphosphate. Functionally, DNA-dependent RNA polymerase catalyzes the transcription of DNA into RNA using the four ribonucleoside triphosphates as substrates. The chain is DNA-directed RNA polymerase subunit beta from Dinoroseobacter shibae (strain DSM 16493 / NCIMB 14021 / DFL 12).